The sequence spans 564 residues: Kelch repeat and BTB domain-containing protein A55 (564 aa).

The BTB domain occupies 21-88 (CDISIVINDE…IYGIPLSLTN (68 aa)). 6 Kelch repeats span residues 252–297 (IELI…VLDN), 298–346 (IIYM…ADDE), 347–395 (YIYC…MLNG), 397–441 (IYVM…VHDG), 442–492 (KIYI…SAHN), and 494–539 (LYVG…CEPI).

It belongs to the poxviruses A55 protein family. Interacts (via BTB domain) with host CUL3.

The protein localises to the host cytoplasm. Probable substrate-specific adapter of CUL3-containing E3 ubiquitin-protein ligases which mediate the ubiquitination and subsequent proteasomal degradation of host target proteins. This Bos taurus (Bovine) protein is Kelch repeat and BTB domain-containing protein A55 (KBTB1).